Consider the following 280-residue polypeptide: Manganese transport system membrane protein MntC (280 aa).

Transmembrane regions (helical) follow at residues 16 to 36 (ALITSVTVGIVSGVIGSFIIL), 41 to 61 (LMGDAISHAVLPGVAISYMMG), 62 to 82 (MNFFIGAATFGIAAALGIGFV), 92 to 112 (TAIGIVFSAFFALGIILISFA), 137 to 157 (TIIIAILVISLVAIFYKEFLV), 168 to 188 (YGLNVRFLHYFLMLLLTLVTV), 193 to 213 (TVGIILVVAMLITPAATAYLL), 221 to 241 (IMLASTFGAVSAIIGLYFSYI), and 244 to 264 (LASGAAMVLVATIIFFIAFLF).

It belongs to the ABC-3 integral membrane protein family.

It is found in the cell membrane. In terms of biological role, this protein is probably a component of a manganese permease, a binding protein-dependent, ATP-driven transport system. The chain is Manganese transport system membrane protein MntC (mntC) from Listeria innocua serovar 6a (strain ATCC BAA-680 / CLIP 11262).